Here is a 308-residue protein sequence, read N- to C-terminus: HTH-type transcriptional regulator YtlI (308 aa).

In terms of domain architecture, HTH lysR-type spans 1 to 57 (MELRSIKTFHTIVKFGSFYKAAEILNYSQPTISMRMKQLEQDLGVLLFERGKSLQLT). A DNA-binding region (H-T-H motif) is located at residues 18-37 (FYKAAEILNYSQPTISMRMK).

It belongs to the LysR transcriptional regulatory family.

Functionally, positively regulates the expression of ytmI operon in response to the availability of sulfur sources. This is HTH-type transcriptional regulator YtlI (ytlI) from Bacillus subtilis (strain 168).